The sequence spans 311 residues: MKREDLLTNVVDDLSLEDLRDLKNLEIIFDKVYGFSAENVVKAVEILRDLIKEADLRFLSFTANLVSTGLRGLLADLIRREYFNVVITTGGTIDHDIARSFGGKYYKGSFEFDDTMLKELEIHRLGNIFIPFENYGKVIEEVVRKYIPEIVSVRKDWSVYELLWEFGKRINDQHSILKACYEKKVPLIVPGVVDGSFGTNLFIVSQFNGLKIDLFQDMRLIKDLIFSSEKSGALIIGGGISKHHTIWWNQFKDGLDYAIYITTAQEYDGSLSGARPREAISWNKVRPSARSVTIYADATIILPILSASLLR.

Catalysis depends on Lys-284, which acts as the Nucleophile.

The protein belongs to the deoxyhypusine synthase family. NAD(+) is required as a cofactor.

It catalyses the reaction [eIF5A protein]-L-lysine + spermidine = [eIF5A protein]-deoxyhypusine + propane-1,3-diamine. It participates in protein modification; eIF5A hypusination. Its function is as follows. Catalyzes the NAD-dependent oxidative cleavage of spermidine and the subsequent transfer of the butylamine moiety of spermidine to the epsilon-amino group of a specific lysine residue of the eIF-5A precursor protein to form the intermediate deoxyhypusine residue. This is Probable deoxyhypusine synthase from Sulfolobus acidocaldarius (strain ATCC 33909 / DSM 639 / JCM 8929 / NBRC 15157 / NCIMB 11770).